A 686-amino-acid chain; its full sequence is Catalase-2 (686 aa).

Over residues 1–27 (MSDDQNKRVNEHSKDEQLEQYRTDNSG) the composition is skewed to basic and acidic residues. The disordered stretch occupies residues 1-43 (MSDDQNKRVNEHSKDEQLEQYRTDNSGKKMTTNQGLRVSEDEH). Catalysis depends on residues histidine 78 and asparagine 151. Residue tyrosine 365 coordinates heme.

This sequence belongs to the catalase family. HPII subfamily. The cofactor is heme.

The catalysed reaction is 2 H2O2 = O2 + 2 H2O. Decomposes hydrogen peroxide into water and oxygen; serves to protect cells from the toxic effects of hydrogen peroxide. Involved in sporulation. In Bacillus subtilis (strain 168), this protein is Catalase-2 (katE).